The primary structure comprises 372 residues: DNA replication and repair protein RecF (372 aa).

Residue 30–37 coordinates ATP; it reads GANGQGKT.

Belongs to the RecF family.

The protein resides in the cytoplasm. The RecF protein is involved in DNA metabolism; it is required for DNA replication and normal SOS inducibility. RecF binds preferentially to single-stranded, linear DNA. It also seems to bind ATP. The chain is DNA replication and repair protein RecF from Heliobacterium modesticaldum (strain ATCC 51547 / Ice1).